Consider the following 810-residue polypeptide: Myoneurin (810 aa).

A BTB domain is found at 24–91 (CDCTVSIGQA…IYTGDLNMDR (68 aa)). 2 disordered regions span residues 122–146 (NVGS…DYEP) and 169–466 (VSMD…VKPV). A compositionally biased stretch (polar residues) spans 173–183 (EAQSSSEQTPQ). Basic residues-rich tracts occupy residues 185–194 (VGKRGRKPKT) and 211–225 (GRGR…RPRV). Residues 229–238 (SSDSTDQSPA) show a composition bias toward polar residues. Residues 243-253 (SPNGSSTSRGS) are compositionally biased toward low complexity. Positions 254 to 266 (GRPRGRPRVRPLS) form a DNA-binding region, a.T hook 1. A compositionally biased stretch (basic and acidic residues) spans 270 to 308 (EDPRNVEDDPAANKDQEVEKGNEEQKKETGEKDDGKNDT). The segment at residues 318-330 (KRGRGRPRIKPVS) is a DNA-binding region (a.T hook 2). Residues 331 to 346 (TEDQTTNSENVTTNAE) show a composition bias toward polar residues. The span at 350–361 (EPAKTKDSEGTG) shows a compositional bias: basic and acidic residues. Residues 361–373 (GRKRGRPRSKPVS) constitute a DNA-binding region (a.T hook 3). The span at 386–396 (SGEEAGEETSQ) shows a compositional bias: acidic residues. Over residues 419–428 (ISKRKRILSR) the composition is skewed to basic residues. The Nuclear localization signal motif lies at 428 to 432 (RKLKE). The span at 435–460 (AGDEEEEEEEEMDDEFENDNEDWAGE) shows a compositional bias: acidic residues. C2H2-type zinc fingers lie at residues 472-494 (PICN…MRIH), 500-522 (YQCT…MRIH), 528-551 (FTCT…RMHH), 557-579 (YKCE…IRKH), 585-607 (YECG…KRRH), 613-635 (YICD…NRKH), and 641-663 (YICL…MDVH).

The protein belongs to the krueppel C2H2-type zinc-finger protein family.

Its subcellular location is the nucleus. The chain is Myoneurin (mynn) from Danio rerio (Zebrafish).